Reading from the N-terminus, the 370-residue chain is Translocating chain-associated membrane protein 2 (370 aa).

At 1 to 22 the chain is on the cytoplasmic side; sequence MAFRRRTKSYPLFSQEFIIHNH. Residues 23–43 form a helical membrane-spanning segment; that stretch reads ADIGFCLVLCVLIGLMFEVTA. At 44–75 the chain is on the extracellular side; that stretch reads KTAFLFILPQYNISVPTADSETVHYHYGPKDL. N-linked (GlcNAc...) asparagine glycosylation is present at N55. A helical membrane pass occupies residues 76 to 96; it reads VTILFYVVITIIFHAVVQEYI. The Cytoplasmic portion of the chain corresponds to 97–119; it reads LDKISKRLHLSKVKHSKFNESGQ. In terms of domain architecture, TLC spans 112–321; it reads SKFNESGQLL…HSQLRHWREY (210 aa). The helical transmembrane segment at 120–140 threads the bilayer; the sequence is LLVFHLSAVAWCFYVIVTEGY. At 141–159 the chain is on the extracellular side; it reads LTNPRSLWEDYPHVYLSFQ. Residues 160-180 traverse the membrane as a helical segment; sequence VKFFYLGQLAYWLHSLPELYF. Residues 181 to 191 are Cytoplasmic-facing; the sequence is QKVRKEEVPRQ. A helical membrane pass occupies residues 192–209; sequence LQYICLYLLHITGAYLLN. Over 210–214 the chain is Extracellular; sequence LSRLG. A helical transmembrane segment spans residues 215 to 235; it reads LILLLLQYSTEALFHMARLFH. At 236 to 250 the chain is on the cytoplasmic side; that stretch reads FADENNERLFNAWAA. A helical transmembrane segment spans residues 251–271; that stretch reads VFGVTRLFILTLAVLTIGFGL. The Extracellular segment spans residues 272–287; the sequence is ARVENQVFDPEKGNFN. Residues 288 to 308 form a helical membrane-spanning segment; sequence TLPCRLGMLLLVCVAQAWLMW. Residues 309–370 lie on the Cytoplasmic side of the membrane; it reads RFIHSQLRHW…SSRTKKLKSP (62 aa). A disordered region spans residues 332 to 370; sequence SAVPRPPAKLLKREPGYHENGVVKAENGTSSRTKKLKSP.

It belongs to the TRAM family. Interacts with COL1A1. Interacts with SERCA2B.

It localises to the membrane. Necessary for collagen type I synthesis. May couple the activity of the ER Ca(2+) pump SERCA2B with the activity of the translocon. This coupling may increase the local Ca(2+) concentration at the site of collagen synthesis, and a high Ca(2+) concentration may be necessary for the function of molecular chaperones involved in collagen folding. Required for proper insertion of the first transmembrane helix N-terminus of TM4SF20 into the ER lumen, may act as a ceramide sensor for regulated alternative translocation (RAT). The chain is Translocating chain-associated membrane protein 2 (Tram2) from Mus musculus (Mouse).